A 360-amino-acid chain; its full sequence is Phospho-N-acetylmuramoyl-pentapeptide-transferase (360 aa).

Transmembrane regions (helical) follow at residues 21-41 (YVTF…LWWG), 74-94 (MGGL…GDLG), 97-117 (YVWV…IDDY), 135-155 (LLQS…ADTA), 168-188 (VMPQ…VGSS), 199-219 (GLAI…AYLS), 236-256 (AGEL…FLWF), 263-283 (VFMG…IAVL), 288-308 (ILLV…ILQV), and 338-358 (VIVR…ATLK).

This sequence belongs to the glycosyltransferase 4 family. MraY subfamily. Mg(2+) serves as cofactor.

The protein localises to the cell inner membrane. It carries out the reaction UDP-N-acetyl-alpha-D-muramoyl-L-alanyl-gamma-D-glutamyl-meso-2,6-diaminopimeloyl-D-alanyl-D-alanine + di-trans,octa-cis-undecaprenyl phosphate = di-trans,octa-cis-undecaprenyl diphospho-N-acetyl-alpha-D-muramoyl-L-alanyl-D-glutamyl-meso-2,6-diaminopimeloyl-D-alanyl-D-alanine + UMP. It participates in cell wall biogenesis; peptidoglycan biosynthesis. Functionally, catalyzes the initial step of the lipid cycle reactions in the biosynthesis of the cell wall peptidoglycan: transfers peptidoglycan precursor phospho-MurNAc-pentapeptide from UDP-MurNAc-pentapeptide onto the lipid carrier undecaprenyl phosphate, yielding undecaprenyl-pyrophosphoryl-MurNAc-pentapeptide, known as lipid I. The polypeptide is Phospho-N-acetylmuramoyl-pentapeptide-transferase (Shewanella piezotolerans (strain WP3 / JCM 13877)).